The sequence spans 348 residues: MFIVAVLMLAFLIFVHELGHFTIARICGVKVEVFSIGFGKKLCFFKLFGTQFALSLIPLGGYVKLKGMDKEENGMNETTDDSYAQKSPFQKLWILFGGAFFNFLFAILVYFFLALGGEKVLLPVIGDLDKNALEAGLLKGDKILSINHKKIASFREIRSVVARARGELVLEIERNHQVLEKRLTPKIVAVISDSNDPNEMIRYKAIGIKPDMQKMGVVSYSLFQAFEKALSRFKEGVVLIVDSLRRLIMGSSSVKELSGVVGIVGALSHANSLSMLLLFGAFLSINLGILNLLPIPALDGAQMLGVVFKNIFHITLPTPIQNALWLAGVGFLVFIMFLGLFNDLTRLL.

Residue histidine 16 participates in Zn(2+) binding. The active site involves glutamate 17. Histidine 20 lines the Zn(2+) pocket. 5 helical membrane-spanning segments follow: residues 43 to 63, 93 to 113, 247 to 267, 275 to 295, and 324 to 344; these read CFFK…GGYV, WILF…YFFL, LIMG…VGAL, MLLL…LLPI, and LWLA…FNDL. A PDZ domain is found at 106–175; it reads AILVYFFLAL…GELVLEIERN (70 aa).

The protein belongs to the peptidase M50B family. Zn(2+) is required as a cofactor.

Its subcellular location is the cell inner membrane. This Helicobacter pylori (strain ATCC 700392 / 26695) (Campylobacter pylori) protein is Putative zinc metalloprotease HP_0258.